The primary structure comprises 325 residues: Mitochondrial thiamine pyrophosphate carrier 1 (325 aa).

Solcar repeat units lie at residues 12-111, 122-209, and 216-312; these read GSRL…TTLL, PPSA…LRPH, and PFSS…ALKF. 6 helical membrane-spanning segments follow: residues 17-35, 92-108, 127-143, 184-200, 223-239, and 287-304; these read VTAAGATAGLVARFVIAPL, LLYVCYSAIQFTTYRTT, SFVAGAIGGGTATAATY, VWDRAWAQIIPYMSFFF, VARTMASVMAKSRTFPL, and GLTVSLLKAAPASAVTMW.

Belongs to the mitochondrial carrier (TC 2.A.29) family.

It localises to the mitochondrion inner membrane. Functionally, mitochondrial transporter that mediates uptake of thiamine pyrophosphate (ThPP) into mitochondria. This chain is Mitochondrial thiamine pyrophosphate carrier 1 (TPC1), found in Chaetomium globosum (strain ATCC 6205 / CBS 148.51 / DSM 1962 / NBRC 6347 / NRRL 1970) (Soil fungus).